Reading from the N-terminus, the 203-residue chain is Probable nicotinate-nucleotide adenylyltransferase (203 aa).

This sequence belongs to the NadD family.

The enzyme catalyses nicotinate beta-D-ribonucleotide + ATP + H(+) = deamido-NAD(+) + diphosphate. Its pathway is cofactor biosynthesis; NAD(+) biosynthesis; deamido-NAD(+) from nicotinate D-ribonucleotide: step 1/1. In terms of biological role, catalyzes the reversible adenylation of nicotinate mononucleotide (NaMN) to nicotinic acid adenine dinucleotide (NaAD). The chain is Probable nicotinate-nucleotide adenylyltransferase from Prosthecochloris aestuarii (strain DSM 271 / SK 413).